Reading from the N-terminus, the 96-residue chain is Small ribosomal subunit protein bS6 (96 aa).

This sequence belongs to the bacterial ribosomal protein bS6 family.

Its function is as follows. Binds together with bS18 to 16S ribosomal RNA. In Gloeobacter violaceus (strain ATCC 29082 / PCC 7421), this protein is Small ribosomal subunit protein bS6.